Consider the following 134-residue polypeptide: ATP synthase epsilon chain (134 aa).

It belongs to the ATPase epsilon chain family. As to quaternary structure, F-type ATPases have 2 components, CF(1) - the catalytic core - and CF(0) - the membrane proton channel. CF(1) has five subunits: alpha(3), beta(3), gamma(1), delta(1), epsilon(1). CF(0) has three main subunits: a, b and c.

The protein localises to the cell membrane. Its function is as follows. Produces ATP from ADP in the presence of a proton gradient across the membrane. This Alkaliphilus metalliredigens (strain QYMF) protein is ATP synthase epsilon chain.